A 354-amino-acid chain; its full sequence is MANTYHNDLLAPYLSLDQGDKIQAEYVWIDGDGGLRCKTTTVSKKVTDIGQLRIWDFDGSSTNQAPGHDSDVYLRPAAIFKDPFRGGDNILVLAETYNNDGTPNRTNHRHHAKKVFDEAKEHEPWFGLEQEYTLFDADDQPYGWPKGGFPGPQGPYYCGAGTGKVFARDLIEAHYRACLYAGINISGINAEVMPSQWEFQVGPCEGISMGDHLWMARYLLVRIAEQWGVKVSFHPKPLKGEWNGAGCHTNFSTKAMREAGGMKFIEDAIEKLAKRHDEHIAVYGEDNDLRLTGRHETGHISNFSSGVANRGASIRVPRHVASQGYGYLEDRRPASNIDPYRVTSIIAETTILDK.

In terms of domain architecture, GS beta-grasp spans 22 to 101 (IQAEYVWIDG…VLAETYNNDG (80 aa)). Residues 108–354 (HRHHAKKVFD…IIAETTILDK (247 aa)) enclose the GS catalytic domain.

Belongs to the glutamine synthetase family. As to quaternary structure, homooctamer.

Its subcellular location is the cytoplasm. It catalyses the reaction L-glutamate + NH4(+) + ATP = L-glutamine + ADP + phosphate + H(+). In Agaricus bisporus (White button mushroom), this protein is Glutamine synthetase (glnA).